The sequence spans 147 residues: Sec-independent protein translocase protein TatB (147 aa).

A helical membrane pass occupies residues 1 to 21; it reads MFDVSFTELMVIGVIALVVIG. A disordered region spans residues 67–147; sequence DETARSMQTS…DKTPPTGSAT (81 aa). The segment covering 93–103 has biased composition (basic and acidic residues); the sequence is AELDDTARDAS. 2 stretches are compositionally biased toward low complexity: residues 109 to 120 and 129 to 147; these read ADAPAEPAPAVA and APPAAATPADKTPPTGSAT.

This sequence belongs to the TatB family. In terms of assembly, the Tat system comprises two distinct complexes: a TatABC complex, containing multiple copies of TatA, TatB and TatC subunits, and a separate TatA complex, containing only TatA subunits. Substrates initially bind to the TatABC complex, which probably triggers association of the separate TatA complex to form the active translocon.

The protein resides in the cell inner membrane. In terms of biological role, part of the twin-arginine translocation (Tat) system that transports large folded proteins containing a characteristic twin-arginine motif in their signal peptide across membranes. Together with TatC, TatB is part of a receptor directly interacting with Tat signal peptides. TatB may form an oligomeric binding site that transiently accommodates folded Tat precursor proteins before their translocation. The polypeptide is Sec-independent protein translocase protein TatB (Bordetella pertussis (strain Tohama I / ATCC BAA-589 / NCTC 13251)).